The following is a 120-amino-acid chain: Large ribosomal subunit protein uL18 (120 aa).

This sequence belongs to the universal ribosomal protein uL18 family. Part of the 50S ribosomal subunit; part of the 5S rRNA/L5/L18/L25 subcomplex. Contacts the 5S and 23S rRNAs.

Its function is as follows. This is one of the proteins that bind and probably mediate the attachment of the 5S RNA into the large ribosomal subunit, where it forms part of the central protuberance. This chain is Large ribosomal subunit protein uL18, found in Staphylococcus epidermidis (strain ATCC 35984 / DSM 28319 / BCRC 17069 / CCUG 31568 / BM 3577 / RP62A).